The primary structure comprises 28 residues: M-poneritoxin-Dq4a (28 aa).

Ala-28 is modified (alanine amide).

Expressed by the venom gland.

The protein localises to the secreted. The synthetic peptide has weak antimicrobial activity against Gram-negative bacterium E.coli ATCC 10536. It does not show antimicrobial activity against the Gram-positive bacteria B.amyloliquefacies S499, L.monocytogenes 2231 and S.aureus ATCC 29213, against the Gram-negative bacteria P.putida BTP1 and P.aeruginosa PaO1, or against the fungi S.cerevisiae, R.mucilaginosa, C.cucumerinum, F.oxysporum and B.cinerea. This chain is M-poneritoxin-Dq4a, found in Dinoponera quadriceps (South American ant).